The chain runs to 295 residues: MIVSMLAATDLARILDGRRIADDLLDALKTRVDARVAAGKLPPTLAVVLVGSDPASVVYVRNKRRAAEKVGIKAYDFDLPEATTEAELAALIDRLNADPKIHGILIQLPLPGIPDAHRLIQRVDPRKDVDGFHPQNVGHLALREFGLRPCTPRGIVTLLGHTDRPVRGRNATIVGVSNHVGRPMGLELLMAGCTVTSCHKFTPPQMLEAAVRQADILIVAVGRPGVIPGEWVKPGAVVIDVGINRLDDGRLVGDVGFESAVKRASWITPVPGGVGPMTVATLMQNTLEAAEAADC.

NADP(+)-binding positions include 175–177 and I243; that span reads GVS.

It belongs to the tetrahydrofolate dehydrogenase/cyclohydrolase family. In terms of assembly, homodimer.

It catalyses the reaction (6R)-5,10-methylene-5,6,7,8-tetrahydrofolate + NADP(+) = (6R)-5,10-methenyltetrahydrofolate + NADPH. The enzyme catalyses (6R)-5,10-methenyltetrahydrofolate + H2O = (6R)-10-formyltetrahydrofolate + H(+). Its pathway is one-carbon metabolism; tetrahydrofolate interconversion. In terms of biological role, catalyzes the oxidation of 5,10-methylenetetrahydrofolate to 5,10-methenyltetrahydrofolate and then the hydrolysis of 5,10-methenyltetrahydrofolate to 10-formyltetrahydrofolate. The protein is Bifunctional protein FolD of Xylella fastidiosa (strain 9a5c).